We begin with the raw amino-acid sequence, 293 residues long: 33 kDa chaperonin (293 aa).

Intrachain disulfides connect C237/C239 and C271/C274.

Belongs to the HSP33 family. Under oxidizing conditions two disulfide bonds are formed involving the reactive cysteines. Under reducing conditions zinc is bound to the reactive cysteines and the protein is inactive.

The protein localises to the cytoplasm. Redox regulated molecular chaperone. Protects both thermally unfolding and oxidatively damaged proteins from irreversible aggregation. Plays an important role in the bacterial defense system toward oxidative stress. The sequence is that of 33 kDa chaperonin from Haemophilus influenzae (strain ATCC 51907 / DSM 11121 / KW20 / Rd).